Consider the following 430-residue polypeptide: Histidinol dehydrogenase (430 aa).

Positions 130, 191, and 214 each coordinate NAD(+). Substrate-binding residues include Ser237, Gln259, and His262. Residues Gln259 and His262 each coordinate Zn(2+). Residues Glu327 and His328 each act as proton acceptor in the active site. Substrate contacts are provided by His328, Asp361, Glu415, and His420. Asp361 is a binding site for Zn(2+). Zn(2+) is bound at residue His420.

This sequence belongs to the histidinol dehydrogenase family. The cofactor is Zn(2+).

It carries out the reaction L-histidinol + 2 NAD(+) + H2O = L-histidine + 2 NADH + 3 H(+). It functions in the pathway amino-acid biosynthesis; L-histidine biosynthesis; L-histidine from 5-phospho-alpha-D-ribose 1-diphosphate: step 9/9. Its function is as follows. Catalyzes the sequential NAD-dependent oxidations of L-histidinol to L-histidinaldehyde and then to L-histidine. The sequence is that of Histidinol dehydrogenase from Brucella abortus (strain 2308).